Here is a 544-residue protein sequence, read N- to C-terminus: Lariat debranching enzyme (544 aa).

A divalent metal cation contacts are provided by C8, H10, D39, and N84. The tract at residues 124–154 is lariat recognition loop; the sequence is SGIFKSHDYRKGHFECPPYNSSTIRSIYHVR. K128 is modified (N6-acetyllysine). A divalent metal cation contacts are provided by H174, H226, and H228. Acidic residues predominate over residues 395–412; it reads EYEEQDDVESNDSGEDQS. The interval 395–463 is disordered; it reads EYEEQDDVES…PSDQASEFSA (69 aa). A compositionally biased stretch (polar residues) spans 413-425; that stretch reads EYNTDTSALSSIN. Acidic residues predominate over residues 429–439; sequence IMLDEEEDEDS. The span at 445-463 shows a compositional bias: polar residues; that stretch reads SGMNTPSVEPSDQASEFSA. Phosphoserine occurs at positions 464, 474, 478, 479, 485, 499, and 514. The interval 476-544 is disordered; it reads IVSSDDTVDS…AVDDDDDDAA (69 aa). Residues 512–522 show a composition bias toward basic and acidic residues; that stretch reads RLSDEHEPEQR.

The protein belongs to the lariat debranching enzyme family. Requires Fe(2+) as cofactor. It depends on Zn(2+) as a cofactor. Mn(2+) is required as a cofactor. In terms of tissue distribution, ubiquitously expressed, strongest expression in the spinal cord and brainstem.

Its subcellular location is the nucleus. With respect to regulation, active in presence of diverse metals including Fe(2+), Zn(2+), Mn(2+). Also activated by Ca(2+). Binds two metal cations in two adjacent alpha and beta metal-binding pockets. Cleaves the 2'-5' phosphodiester linkage at the branch point of excised lariat intron RNA and converts them into linear molecules that can be subsequently degraded, thereby facilitating ribonucleotide turnover. Linked to its role in pre-mRNA processing mechanism, may also participate in retrovirus replication via an RNA lariat intermediate in cDNA synthesis and have an antiviral cell-intrinsic defense function in the brainstem. This chain is Lariat debranching enzyme (DBR1), found in Homo sapiens (Human).